Here is a 90-residue protein sequence, read N- to C-terminus: Probable Fe(2+)-trafficking protein (90 aa).

It belongs to the Fe(2+)-trafficking protein family.

In terms of biological role, could be a mediator in iron transactions between iron acquisition and iron-requiring processes, such as synthesis and/or repair of Fe-S clusters in biosynthetic enzymes. This Pseudomonas fluorescens (strain ATCC BAA-477 / NRRL B-23932 / Pf-5) protein is Probable Fe(2+)-trafficking protein.